Here is a 558-residue protein sequence, read N- to C-terminus: Adenine deaminase (558 aa).

It belongs to the metallo-dependent hydrolases superfamily. Adenine deaminase family. It depends on Mn(2+) as a cofactor.

The catalysed reaction is adenine + H2O + H(+) = hypoxanthine + NH4(+). The polypeptide is Adenine deaminase (Methanoregula boonei (strain DSM 21154 / JCM 14090 / 6A8)).